The primary structure comprises 96 residues: Nucleoid-associated protein CCA_00330 (96 aa).

This sequence belongs to the YbaB/EbfC family. In terms of assembly, homodimer.

It localises to the cytoplasm. The protein resides in the nucleoid. In terms of biological role, binds to DNA and alters its conformation. May be involved in regulation of gene expression, nucleoid organization and DNA protection. The chain is Nucleoid-associated protein CCA_00330 from Chlamydia caviae (strain ATCC VR-813 / DSM 19441 / 03DC25 / GPIC) (Chlamydophila caviae).